The following is a 98-amino-acid chain: NADH-ubiquinone oxidoreductase chain 4L (98 aa).

The next 3 helical transmembrane spans lie at 1 to 21 (MIPTYMNIMLAFTISLLGMLI), 29 to 49 (SLLCLEGMMMSLFIMTTLIAL), and 61 to 81 (IILLVFAACEAAVGLALLVSI).

This sequence belongs to the complex I subunit 4L family. In terms of assembly, core subunit of respiratory chain NADH dehydrogenase (Complex I) which is composed of 45 different subunits.

Its subcellular location is the mitochondrion inner membrane. It catalyses the reaction a ubiquinone + NADH + 5 H(+)(in) = a ubiquinol + NAD(+) + 4 H(+)(out). In terms of biological role, core subunit of the mitochondrial membrane respiratory chain NADH dehydrogenase (Complex I) which catalyzes electron transfer from NADH through the respiratory chain, using ubiquinone as an electron acceptor. Part of the enzyme membrane arm which is embedded in the lipid bilayer and involved in proton translocation. In Macaca ochreata (Booted macaque), this protein is NADH-ubiquinone oxidoreductase chain 4L (MT-ND4L).